The sequence spans 247 residues: MRVKCTIAYDGHLFNGYQVQPGKRTVQSELEKALAVIHKTDGRVPVYSSGRTDSDVHAAGQVIHFDTPLSIPGEKWPFALNALLPDDIAVKTAEIADDGFHARFSAVQKEYRYFVYTEKHPDVFKRHYAYHFAYPLNVQKMREASRHLVGTHDFTSFCAADTAVQDKVRTIYELDWTETVDGLQMRITGNGFLYNMVRIIAGTLLDTGAGKFSPDDVKAMLEAKDREAAGRTAPGHGLYLWSVCYDN.

The active-site Nucleophile is Asp53. Tyr111 is a binding site for substrate.

It belongs to the tRNA pseudouridine synthase TruA family. In terms of assembly, homodimer.

The catalysed reaction is uridine(38/39/40) in tRNA = pseudouridine(38/39/40) in tRNA. Its function is as follows. Formation of pseudouridine at positions 38, 39 and 40 in the anticodon stem and loop of transfer RNAs. The protein is tRNA pseudouridine synthase A of Bacillus velezensis (strain DSM 23117 / BGSC 10A6 / LMG 26770 / FZB42) (Bacillus amyloliquefaciens subsp. plantarum).